The chain runs to 615 residues: DNA mismatch repair protein MutL (615 aa).

The interval 369-397 (REPVAPRYTPAPASGSRPAAPWPNAQPGY) is disordered. Low complexity predominate over residues 378–391 (PAPASGSRPAAPWP).

This sequence belongs to the DNA mismatch repair MutL/HexB family.

Its function is as follows. This protein is involved in the repair of mismatches in DNA. It is required for dam-dependent methyl-directed DNA mismatch repair. May act as a 'molecular matchmaker', a protein that promotes the formation of a stable complex between two or more DNA-binding proteins in an ATP-dependent manner without itself being part of a final effector complex. In Escherichia coli (strain SMS-3-5 / SECEC), this protein is DNA mismatch repair protein MutL.